The chain runs to 92 residues: Small ribosomal subunit protein uS19 (92 aa).

The protein belongs to the universal ribosomal protein uS19 family.

Protein S19 forms a complex with S13 that binds strongly to the 16S ribosomal RNA. The chain is Small ribosomal subunit protein uS19 from Variovorax paradoxus (strain S110).